A 342-amino-acid chain; its full sequence is Renalase (342 aa).

An N-terminal signal peptide occupies residues 1 to 17 (MAQVLIVGAGMTGSLCA). FAD-binding positions include Thr-12, Arg-42, and 61–62 (QY).

Belongs to the renalase family. It depends on FAD as a cofactor. As to expression, secreted into the blood by the kidney. Highly expressed in the kidney, expressed at lower level in heart, skeletal muscle and small intestine. Its plasma concentration is markedly reduced in patients with end-stage renal disease, as compared with healthy subjects.

Its subcellular location is the secreted. The enzyme catalyses 1,2-dihydro-beta-NAD + O2 + H(+) = H2O2 + NAD(+). The catalysed reaction is 1,2-dihydro-beta-NADP + O2 + H(+) = H2O2 + NADP(+). It carries out the reaction 1,6-dihydro-beta-NADP + O2 + H(+) = H2O2 + NADP(+). It catalyses the reaction 1,6-dihydro-beta-NAD + O2 + H(+) = H2O2 + NAD(+). In terms of biological role, catalyzes the oxidation of the less abundant 1,2-dihydro-beta-NAD(P) and 1,6-dihydro-beta-NAD(P) to form beta-NAD(P)(+). The enzyme hormone is secreted by the kidney, and circulates in blood and modulates cardiac function and systemic blood pressure. Lowers blood pressure in vivo by decreasing cardiac contractility and heart rate and preventing a compensatory increase in peripheral vascular tone, suggesting a causal link to the increased plasma catecholamine and heightened cardiovascular risk. High concentrations of catecholamines activate plasma renalase and promotes its secretion and synthesis. This chain is Renalase (RNLS), found in Homo sapiens (Human).